We begin with the raw amino-acid sequence, 1297 residues long: DNA-directed RNA polymerase subunit beta' (1297 aa).

The Zn(2+) site is built by C60, C62, C75, and C78. Mg(2+) contacts are provided by D535, D537, and D539. 4 residues coordinate Zn(2+): C883, C961, C968, and C971.

Belongs to the RNA polymerase beta' chain family. In terms of assembly, the RNAP catalytic core consists of 2 alpha, 1 beta, 1 beta' and 1 omega subunit. When a sigma factor is associated with the core the holoenzyme is formed, which can initiate transcription. Mg(2+) serves as cofactor. Zn(2+) is required as a cofactor.

The catalysed reaction is RNA(n) + a ribonucleoside 5'-triphosphate = RNA(n+1) + diphosphate. Functionally, DNA-dependent RNA polymerase catalyzes the transcription of DNA into RNA using the four ribonucleoside triphosphates as substrates. The protein is DNA-directed RNA polymerase subunit beta' of Salinispora tropica (strain ATCC BAA-916 / DSM 44818 / JCM 13857 / NBRC 105044 / CNB-440).